The primary structure comprises 157 residues: Endoribonuclease YbeY (157 aa).

Positions 112, 116, and 122 each coordinate Zn(2+).

Belongs to the endoribonuclease YbeY family. The cofactor is Zn(2+).

The protein resides in the cytoplasm. In terms of biological role, single strand-specific metallo-endoribonuclease involved in late-stage 70S ribosome quality control and in maturation of the 3' terminus of the 16S rRNA. The protein is Endoribonuclease YbeY of Marinobacter nauticus (strain ATCC 700491 / DSM 11845 / VT8) (Marinobacter aquaeolei).